The primary structure comprises 518 residues: Fusicoccin H C-9 hydroxylase (518 aa).

Residues 12–29 (HLLLISTVIAVLAALIVS) form a helical membrane-spanning segment. N-linked (GlcNAc...) asparagine glycosylation is found at Asn81 and Asn168. Position 456 (Cys456) interacts with heme.

The protein belongs to the cytochrome P450 family. Heme serves as cofactor.

The protein resides in the membrane. Its pathway is mycotoxin biosynthesis. In terms of biological role, cytochrome P450 monooxygenase; part of the 2 gene clusters that mediate the biosynthesis of fusicoccins, diterpene glucosides that display phytohormone-like activity and function as potent activators of plasma membrane H(+)-ATPases in plants by modifying 14-3-3 proteins and cause the plant disease constriction canker. The first step in the pathway is performed by the fusicoccadiene synthase PaFS that possesses both prenyl transferase and terpene cyclase activity, converting isopentenyl diphosphate and dimethylallyl diphosphate into geranylgeranyl diphosphate (GGDP) and successively converting GGDP into fusicocca-2,10(14)-diene, a precursor for fusicoccin H. The second step is the oxidation at the C-8 position by the cytochrome P450 monooxygenase PaP450-2 to yield fusicocca-2,10(14)-diene-8-beta-ol. The cytochrome P450 monooxygenase PaP450-1 then catalyzes the hydroxylation at the C-16 position to produce fusicocca-2,10(14)-diene-8-beta,16-diol. The dioxygenase fc-dox then catalyzes the 16-oxydation of fusicocca-2,10(14)-diene-8-beta,16-diol to yield an aldehyde (8-beta-hydroxyfusicocca-1,10(14)-dien-16-al). The short-chain dehydrogenase/reductase fc-sdr catalyzes the reduction of the aldehyde to yield fusicocca-1,10(14)-diene-8-beta,16-diol. The next step is the hydroxylation at C-9 performed by the cytochrome P450 monooxygenase PaP450-3 that leads to fusicoccin H aglycon which is glycosylated to fusicoccin H by the O-glycosyltransferase PaGT. Hydroxylation at C-12 by the cytochrome P450 monooxygenase PaP450-4 leads then to the production of fusicoccin Q and is followed by methylation by the O-methyltransferase PaMT to yield fusicoccin P. Fusicoccin P is further converted to fusicoccin J via prenylation by the O-glucose prenyltransferase PaPT. Cytochrome P450 monooxygenase PaP450-5 then performs hydroxylation at C-19 to yield dideacetyl-fusicoccin A which is acetylated to 3'-O-deacetyl-fusicoccin A by the O-acetyltransferase PaAT-2. Finally, a another acetylation by the O-acetyltransferase PaAT-1 yields fusicoccin A. The chain is Fusicoccin H C-9 hydroxylase from Phomopsis amygdali (Fusicoccum amygdali).